Here is a 94-residue protein sequence, read N- to C-terminus: Co-chaperonin GroES (94 aa).

This sequence belongs to the GroES chaperonin family. As to quaternary structure, heptamer of 7 subunits arranged in a ring. Interacts with the chaperonin GroEL.

The protein localises to the cytoplasm. Together with the chaperonin GroEL, plays an essential role in assisting protein folding. The GroEL-GroES system forms a nano-cage that allows encapsulation of the non-native substrate proteins and provides a physical environment optimized to promote and accelerate protein folding. GroES binds to the apical surface of the GroEL ring, thereby capping the opening of the GroEL channel. This chain is Co-chaperonin GroES, found in Ruminiclostridium cellulolyticum (strain ATCC 35319 / DSM 5812 / JCM 6584 / H10) (Clostridium cellulolyticum).